The sequence spans 303 residues: Oxygen-dependent coproporphyrinogen-III oxidase (303 aa).

S93 lines the substrate pocket. Positions 97 and 107 each coordinate a divalent metal cation. The Proton donor role is filled by H107. Residue 109 to 111 participates in substrate binding; sequence NIR. A divalent metal cation contacts are provided by H146 and H176. Residues 241–276 are important for dimerization; it reads YVEFNLLLDRGTLFGIQSNGRIESILSSMPPLVKWE.

It belongs to the aerobic coproporphyrinogen-III oxidase family. In terms of assembly, homodimer. It depends on a divalent metal cation as a cofactor.

It is found in the cytoplasm. The enzyme catalyses coproporphyrinogen III + O2 + 2 H(+) = protoporphyrinogen IX + 2 CO2 + 2 H2O. It functions in the pathway porphyrin-containing compound metabolism; protoporphyrin-IX biosynthesis; protoporphyrinogen-IX from coproporphyrinogen-III (O2 route): step 1/1. Its function is as follows. Involved in the heme biosynthesis. Catalyzes the aerobic oxidative decarboxylation of propionate groups of rings A and B of coproporphyrinogen-III to yield the vinyl groups in protoporphyrinogen-IX. This is Oxygen-dependent coproporphyrinogen-III oxidase from Wigglesworthia glossinidia brevipalpis.